The primary structure comprises 124 residues: ATP synthase epsilon chain (124 aa).

This sequence belongs to the ATPase epsilon chain family. F-type ATPases have 2 components, CF(1) - the catalytic core - and CF(0) - the membrane proton channel. CF(1) has five subunits: alpha(3), beta(3), gamma(1), delta(1), epsilon(1). CF(0) has three main subunits: a, b and c.

The protein localises to the cell membrane. In terms of biological role, produces ATP from ADP in the presence of a proton gradient across the membrane. In Streptomyces avermitilis (strain ATCC 31267 / DSM 46492 / JCM 5070 / NBRC 14893 / NCIMB 12804 / NRRL 8165 / MA-4680), this protein is ATP synthase epsilon chain.